Consider the following 443-residue polypeptide: Mimosinase, chloroplastic (443 aa).

The N-terminal 43 residues, 1-43, are a transit peptide targeting the chloroplast; the sequence is MALSSTFLNPLVSSVAVNPQPKITSGKGFRVNCLIRTQQTVIK. 6 residues coordinate pyridoxal 5'-phosphate: Y105, R107, G135, M136, S254, and T256. K257 is modified (N6-(pyridoxal phosphate)lysine).

The protein belongs to the trans-sulfuration enzymes family. In terms of assembly, forms homodimers. May form homotetramers from two homodimers. Pyridoxal 5'-phosphate serves as cofactor.

The protein resides in the plastid. It localises to the chloroplast. It catalyses the reaction L-mimosine + H2O = 3-hydroxy-4H-pyrid-4-one + pyruvate + NH4(+). Its function is as follows. Catalyzes the degradation of mimosine, which is a toxic secondary metabolite found in all Leucaena and Mimosa species. This is Mimosinase, chloroplastic from Leucaena leucocephala (White popinac).